We begin with the raw amino-acid sequence, 300 residues long: MNNVLIITGPTASGKSKISIKIAQDNNGVIINCDSKQIYKEIPIITDQPKLNETFIPHKLYGYVSAVKQYSVAEWVNDLKREIYQTFTENKLPIITGGSGMYISSIIYGLSQIPAIEENIRYQTKQLFNTLGNKEFYSLLIEKDPIAKRLHYNNSYQLLRAYEVIEQTGTSIFRLQEELKRKPLFDNFTLCILVPQRQEVYKKINDRFISMINSSVIEEVKNLISLNIPNHFPAMKAHGIPEIIQYLTNKISIEKAIEIAQRNTRHYAKRQYTWFKNQFPNALFYESQDQLLKFISKKFK.

9–16 (GPTASGKS) contributes to the ATP binding site. 11–16 (TASGKS) provides a ligand contact to substrate. Positions 34–37 (DSKQ) are interaction with substrate tRNA.

This sequence belongs to the IPP transferase family. As to quaternary structure, monomer. Mg(2+) is required as a cofactor.

It catalyses the reaction adenosine(37) in tRNA + dimethylallyl diphosphate = N(6)-dimethylallyladenosine(37) in tRNA + diphosphate. Functionally, catalyzes the transfer of a dimethylallyl group onto the adenine at position 37 in tRNAs that read codons beginning with uridine, leading to the formation of N6-(dimethylallyl)adenosine (i(6)A). The protein is tRNA dimethylallyltransferase of Ehrlichia ruminantium (strain Welgevonden).